The primary structure comprises 459 residues: Mitochondrial distribution and morphology protein 10 (459 aa).

The protein belongs to the MDM10 family. Component of the ER-mitochondria encounter structure (ERMES) or MDM complex, composed of MMM1, MDM10, MDM12 and MDM34. Associates with the mitochondrial outer membrane sorting assembly machinery SAM(core) complex.

The protein localises to the mitochondrion outer membrane. In terms of biological role, component of the ERMES/MDM complex, which serves as a molecular tether to connect the endoplasmic reticulum and mitochondria. Components of this complex are involved in the control of mitochondrial shape and protein biogenesis and may function in phospholipid exchange. MDM10 is involved in the late assembly steps of the general translocase of the mitochondrial outer membrane (TOM complex). Functions in the TOM40-specific route of the assembly of outer membrane beta-barrel proteins, including the association of TOM40 with the receptor TOM22 and small TOM proteins. Can associate with the SAM(core) complex as well as the MDM12-MMM1 complex, both involved in late steps of the major beta-barrel assembly pathway, that is responsible for biogenesis of all outer membrane beta-barrel proteins. May act as a switch that shuttles between both complexes and channels precursor proteins into the TOM40-specific pathway. Plays a role in mitochondrial morphology and in the inheritance of mitochondria. This Clavispora lusitaniae (strain ATCC 42720) (Yeast) protein is Mitochondrial distribution and morphology protein 10.